The following is a 737-amino-acid chain: Translation initiation factor IF-2 (737 aa).

Over residues 69–80 (EKKEEKPIRKIM) the composition is skewed to basic and acidic residues. Residues 69 to 130 (EKKEEKPIRK…HKNKGKKKKG (62 aa)) form a disordered region. 2 stretches are compositionally biased toward basic residues: residues 95–108 (NNKKAKFQQTKNKK) and 121–130 (HKNKGKKKKG). The region spanning 237 to 404 (ERPPVITIMG…TILITAEILE (168 aa)) is the tr-type G domain. The tract at residues 246–253 (GHVDHGKT) is G1. 246 to 253 (GHVDHGKT) lines the GTP pocket. Residues 271 to 275 (GITQK) form a G2 region. Residues 292-295 (DTPG) form a G3 region. GTP contacts are provided by residues 292–296 (DTPGH) and 346–349 (NKID). Residues 346 to 349 (NKID) are G4. Positions 382–384 (SAK) are G5.

It belongs to the TRAFAC class translation factor GTPase superfamily. Classic translation factor GTPase family. IF-2 subfamily.

It localises to the cytoplasm. One of the essential components for the initiation of protein synthesis. Protects formylmethionyl-tRNA from spontaneous hydrolysis and promotes its binding to the 30S ribosomal subunits. Also involved in the hydrolysis of GTP during the formation of the 70S ribosomal complex. The polypeptide is Translation initiation factor IF-2 (Fusobacterium nucleatum subsp. nucleatum (strain ATCC 25586 / DSM 15643 / BCRC 10681 / CIP 101130 / JCM 8532 / KCTC 2640 / LMG 13131 / VPI 4355)).